The sequence spans 397 residues: Acetate kinase (397 aa).

Residue N8 participates in Mg(2+) binding. K15 is an ATP binding site. Residue R89 coordinates substrate. Catalysis depends on D146, which acts as the Proton donor/acceptor. ATP is bound by residues 206 to 210, 281 to 283, and 329 to 333; these read HLGNG, DLR, and GIGEN. E382 contributes to the Mg(2+) binding site.

The protein belongs to the acetokinase family. Homodimer. Requires Mg(2+) as cofactor. It depends on Mn(2+) as a cofactor.

It localises to the cytoplasm. The catalysed reaction is acetate + ATP = acetyl phosphate + ADP. Its pathway is metabolic intermediate biosynthesis; acetyl-CoA biosynthesis; acetyl-CoA from acetate: step 1/2. Its function is as follows. Catalyzes the formation of acetyl phosphate from acetate and ATP. Can also catalyze the reverse reaction. In Bacillus cytotoxicus (strain DSM 22905 / CIP 110041 / 391-98 / NVH 391-98), this protein is Acetate kinase.